A 618-amino-acid polypeptide reads, in one-letter code: tRNA endonuclease vms-1 (618 aa).

The C2H2-type zinc finger occupies 59–85 (DQCTTCNCPVDFGDRAVLLEHYQSLFH). A VLRF1 domain is found at 170–311 (RPFDCAIFLW…SDCWQRLQQV (142 aa)). Gln213 is an active-site residue. 2 ANK repeats span residues 437–466 (NRSTFLHVSAANDARKCLKYFLEEVNCDSS) and 470–496 (GAGLPPYSSSANSDVKSIFIDYRVKNE). The interval 502–539 (ARTHIPEPKKKVELTEEQEREQAERKKEKKARQKEKEK) is disordered. Residues 505–515 (HIPEPKKKVEL) show a composition bias toward basic and acidic residues. The stretch at 510 to 557 (KKKVELTEEQEREQAERKKEKKARQKEKEKLKKEIAKRDVEEMEERQK) forms a coiled coil.

This sequence belongs to the ANKZF1/VMS1 family. In terms of tissue distribution, in larval stages and in adults, expressed in intestinal cells, specific neurons in the head and the tail, and in the ventral nerve cord.

The protein resides in the cytoplasm. It localises to the mitochondrion. Functionally, endonuclease that cleaves polypeptidyl-tRNAs downstream of the ribosome-associated quality control (RQC) pathway to release incompletely synthesized polypeptides for degradation. The RQC pathway disassembles aberrantly stalled translation complexes to recycle or degrade the constituent parts. Dispensable for viability and growth but is required for protection against oxidative stress and for wild-type life span. The sequence is that of tRNA endonuclease vms-1 (vms-1) from Caenorhabditis elegans.